Reading from the N-terminus, the 400-residue chain is Enoyl-[acyl-carrier-protein] reductase [NADH] 1 (400 aa).

NAD(+) contacts are provided by residues 48–53 (GSSSGY), 74–75 (FE), 111–112 (DA), and 139–140 (LA). Tyr225 is a binding site for substrate. Tyr235 functions as the Proton donor in the catalytic mechanism. NAD(+)-binding positions include Lys244 and 273–275 (VVT).

This sequence belongs to the TER reductase family. In terms of assembly, monomer.

The enzyme catalyses a 2,3-saturated acyl-[ACP] + NAD(+) = a (2E)-enoyl-[ACP] + NADH + H(+). It participates in lipid metabolism; fatty acid biosynthesis. Functionally, involved in the final reduction of the elongation cycle of fatty acid synthesis (FAS II). Catalyzes the reduction of a carbon-carbon double bond in an enoyl moiety that is covalently linked to an acyl carrier protein (ACP). In Photobacterium profundum (strain SS9), this protein is Enoyl-[acyl-carrier-protein] reductase [NADH] 1.